Reading from the N-terminus, the 653-residue chain is NADH-ubiquinone oxidoreductase chain 5 (653 aa).

16 helical membrane-spanning segments follow: residues M1–R21, L30–V50, L81–Y103, F120–V140, F177–V197, L200–A220, T241–M261, L274–F294, V301–L319, N331–S351, F365–F385, F403–L423, I452–T472, L511–F531, G610–L630, and Y631–N651.

It belongs to the complex I subunit 5 family.

It is found in the mitochondrion inner membrane. It catalyses the reaction a ubiquinone + NADH + 5 H(+)(in) = a ubiquinol + NAD(+) + 4 H(+)(out). Core subunit of the mitochondrial membrane respiratory chain NADH dehydrogenase (Complex I) that is believed to belong to the minimal assembly required for catalysis. Complex I functions in the transfer of electrons from NADH to the respiratory chain. The immediate electron acceptor for the enzyme is believed to be ubiquinone. The protein is NADH-ubiquinone oxidoreductase chain 5 (ND5) of Trichophyton rubrum (Athlete's foot fungus).